The following is a 58-amino-acid chain: Isocitrate lyase (58 aa).

This sequence belongs to the isocitrate lyase/PEP mutase superfamily. Isocitrate lyase family. Homotetramer. The cofactor is Mg(2+).

The protein resides in the glyoxysome. The catalysed reaction is D-threo-isocitrate = glyoxylate + succinate. It functions in the pathway carbohydrate metabolism; glyoxylate cycle; (S)-malate from isocitrate: step 1/2. Its function is as follows. Involved in storage lipid mobilization during the growth of higher plant seedling. The polypeptide is Isocitrate lyase (Helianthus annuus (Common sunflower)).